A 350-amino-acid polypeptide reads, in one-letter code: MTVSPVALRRKTECKPHPTARYWKKCDVEALFGLPFLELVHQAAEVHRQNFNPREIQLSTLLSIKTGGCPEDCAYCPQSAHHNTNLGKEQMMDVDEIVEKAKIAKSRGASRFCMGAAWRGPKPKDVETVSAIIKAVKGLGMETCGTFGMLEEGMAEDLKEAGLDYYNHNLDTDPDRYNDIIHTRRHEDRMDTLGKVRNAGLKVCCGGIVGMNETRAERAGLIASLANLDPQPESVPINRLVKVEGTPLDDAEDLDWTEFVRTIAVARITMPQSYVRLSAGRSNMPEAMQAMCFMAGANSIFYGDKLLTTGNPDEDGDRILMEKLNLYPLQFELEGEVAEVEKASGIKVDY.

The region spanning 54–278 is the Radical SAM core domain; that stretch reads REIQLSTLLS…TMPQSYVRLS (225 aa). Residues Cys69, Cys73, and Cys76 each coordinate [4Fe-4S] cluster. [2Fe-2S] cluster is bound by residues Cys113, Cys144, Cys204, and Arg276.

Belongs to the radical SAM superfamily. Biotin synthase family. In terms of assembly, homodimer. [4Fe-4S] cluster serves as cofactor. It depends on [2Fe-2S] cluster as a cofactor.

The catalysed reaction is (4R,5S)-dethiobiotin + (sulfur carrier)-SH + 2 reduced [2Fe-2S]-[ferredoxin] + 2 S-adenosyl-L-methionine = (sulfur carrier)-H + biotin + 2 5'-deoxyadenosine + 2 L-methionine + 2 oxidized [2Fe-2S]-[ferredoxin]. It functions in the pathway cofactor biosynthesis; biotin biosynthesis; biotin from 7,8-diaminononanoate: step 2/2. In terms of biological role, catalyzes the conversion of dethiobiotin (DTB) to biotin by the insertion of a sulfur atom into dethiobiotin via a radical-based mechanism. The chain is Biotin synthase from Neisseria meningitidis serogroup C (strain 053442).